We begin with the raw amino-acid sequence, 743 residues long: GTPase-activating protein gyp7 (743 aa).

Positions 411 to 633 (GIQPSLRKEV…KLWDVLFTNY (223 aa)) constitute a Rab-GAP TBC domain.

It localises to the cytoplasm. The protein localises to the nucleus. Functionally, most effectively accelerates the intrinsic GTPase activity of ypt7. This is GTPase-activating protein gyp7 from Schizosaccharomyces pombe (strain 972 / ATCC 24843) (Fission yeast).